Consider the following 421-residue polypeptide: Diaminobutyrate--2-oxoglutarate transaminase (421 aa).

Lys267 bears the N6-(pyridoxal phosphate)lysine mark.

It belongs to the class-III pyridoxal-phosphate-dependent aminotransferase family. Homohexamer. Pyridoxal 5'-phosphate is required as a cofactor.

The enzyme catalyses L-2,4-diaminobutanoate + 2-oxoglutarate = L-aspartate 4-semialdehyde + L-glutamate. It participates in amine and polyamine biosynthesis; ectoine biosynthesis; L-ectoine from L-aspartate 4-semialdehyde: step 1/3. Its function is as follows. Catalyzes reversively the conversion of L-aspartate beta-semialdehyde (ASA) to L-2,4-diaminobutyrate (DABA) by transamination with L-glutamate. Seems to use L-glutamate specifically as the amino group donor to ASA, as it is not active with L-alanine, L-glutamine, L-aspartate and L-lysine, and is only poorly active with L-homoserine. In the reverse reaction, gamma-aminobutyric acid (GABA) and L-ornithine can also be used as amino group donors to 2-oxoglutarate, but with a reduced activity compared to that with DABA. This Halomonas elongata (strain ATCC 33173 / DSM 2581 / NBRC 15536 / NCIMB 2198 / 1H9) protein is Diaminobutyrate--2-oxoglutarate transaminase (ectB).